Here is a 372-residue protein sequence, read N- to C-terminus: N-methyl-L-tryptophan oxidase (372 aa).

4–34 (DLIIIGSGSVGAAAGYYATRAGLKVLMTDAH) contacts FAD. At Cys-307 the chain carries S-8alpha-FAD cysteine.

The protein belongs to the MSOX/MTOX family. MTOX subfamily. Monomer. FAD serves as cofactor.

It carries out the reaction N(alpha)-methyl-L-tryptophan + O2 + H2O = L-tryptophan + formaldehyde + H2O2. Its function is as follows. Catalyzes the oxidative demethylation of N-methyl-L-tryptophan. This is N-methyl-L-tryptophan oxidase from Salmonella arizonae (strain ATCC BAA-731 / CDC346-86 / RSK2980).